An 812-amino-acid chain; its full sequence is Axin-2 (812 aa).

Residues 1–43 are disordered; that stretch reads MNRTLTDPMVSSFREDDPRPPVPGEEGETTCHHPSKLAMMRPK. An RGS domain is found at 84-203; sequence SLHFLLGDQD…LTSDIYLEYV (120 aa). Disordered regions lie at residues 275–326, 388–430, 446–484, and 609–726; these read SYRR…AIPP, ETMS…TCEE, TPGC…SSMN, and RQTK…SGCH. Residues 285 to 303 are compositionally biased toward polar residues; sequence NRFTSGYSFAPATSANDSE. The segment covering 305-323 has biased composition (low complexity); the sequence is SSDALTDDSMSMTDSSVDA. The segment at 329–415 is interaction with GSK3B; the sequence is LGSKKQLQRE…RDESEMSSSS (87 aa). A compositionally biased stretch (basic and acidic residues) spans 388–397; the sequence is ETMSSLEERL. The span at 401–410 shows a compositional bias: acidic residues; the sequence is QEEEERDESE. The span at 411-421 shows a compositional bias: low complexity; that stretch reads MSSSSASHSLP. The tract at residues 415 to 467 is interaction with beta-catenin; the sequence is SASHSLPLLPPGTCEEDPQAILDEHLSRVLKTPGCQSPGLLRHSPRSRSPEQR. Over residues 475 to 484 the composition is skewed to polar residues; that stretch reads STRSQSSSMN. Residues 672-683 show a composition bias toward basic and acidic residues; that stretch reads EEARRRLEEVSK. The DIX domain maps to 730–812; the sequence is GSETVVTYFF…KILGKVDRMD (83 aa).

Interacts with hwa; leading to promote the tankyrase-mediated degradation of axin1. In terms of processing, ADP-ribosylated by tankyrase tnks and tnks2. Poly-ADP-ribosylated protein is recognized by rnf146, followed by ubiquitination and subsequent activation of the Wnt signaling pathway. Ubiquitinated by rnf146 when poly-ADP-ribosylated, leading to its degradation and subsequent activation of the Wnt signaling pathway.

Its subcellular location is the cytoplasm. Component of the beta-catenin destruction complex required for regulating ctnnb1 levels through phosphorylation and ubiquitination, and modulating Wnt-signaling. Controls dorsoventral patterning by down-regulating ctnnb1 to inhibit the Wnt signaling pathway and ventralize embryos. The protein is Axin-2 (axin2) of Danio rerio (Zebrafish).